The primary structure comprises 326 residues: Transformer-2 protein homolog (326 aa).

Disordered stretches follow at residues 1 to 114 and 179 to 326; these read MEVA…PSNV and LHGK…SYRR. The segment covering 38–55 has biased composition (basic and acidic residues); it reads RDSRERSPPRGNSRERSP. A compositionally biased stretch (low complexity) spans 56–85; it reads PRGGSPNRGGSPNRGGSPNRGGSPNRGGSP. Polar residues predominate over residues 104–113; sequence RLANTASPSN. The RRM domain occupies 113 to 191; the sequence is NVLGVFGLAP…KSIRTDFSAT (79 aa). Positions 220–239 are enriched in gly residues; the sequence is YGGGDRYGRGDYGGRGGGGD. Positions 240–326 are enriched in basic and acidic residues; that stretch reads RYGRDDRGGD…DERPRDSYRR (87 aa).

It belongs to the splicing factor SR family.

The protein localises to the nucleus. In terms of biological role, sequence-specific RNA-binding protein which participates in the control of pre-mRNA splicing. The sequence is that of Transformer-2 protein homolog (tra2) from Dictyostelium discoideum (Social amoeba).